Here is a 360-residue protein sequence, read N- to C-terminus: Peptide chain release factor 1 (360 aa).

Position 237 is an N5-methylglutamine (Q237).

The protein belongs to the prokaryotic/mitochondrial release factor family. Methylated by PrmC. Methylation increases the termination efficiency of RF1.

The protein resides in the cytoplasm. In terms of biological role, peptide chain release factor 1 directs the termination of translation in response to the peptide chain termination codons UAG and UAA. This chain is Peptide chain release factor 1, found in Pseudomonas putida (strain ATCC 47054 / DSM 6125 / CFBP 8728 / NCIMB 11950 / KT2440).